Reading from the N-terminus, the 490-residue chain is Beta-glucosidase 42 (490 aa).

A beta-D-glucoside-binding positions include Gln-35, His-137, Asn-182–Glu-183, Tyr-317, and Glu-388. Glu-183 functions as the Proton donor in the catalytic mechanism. Catalysis depends on Glu-388, which acts as the Nucleophile. N-linked (GlcNAc...) asparagine glycosylation is present at Asn-420. Residues Trp-437, Glu-444 to Trp-445, and Phe-453 each bind a beta-D-glucoside.

It belongs to the glycosyl hydrolase 1 family. As to expression, expressed at low levels predominantly in root epidermal cells.

It carries out the reaction Hydrolysis of terminal, non-reducing beta-D-glucosyl residues with release of beta-D-glucose.. Functionally, glucosidase that hydrolyzes scopolin and various beta-glucosides, cellooligosaccharides (mainly cellotriose) and laminarioligosaccharides. Can use p-nitrophenyl-beta-glucosides (pNP beta-Glc) and p-nitrophenyl-beta-D-fucosides (pNP beta-D-Fuc) as substrates, and, to a lower extent, beta-galactosides, beta-mannosides and beta-xylosides. Involved in the secretion of root-derived phenolics upon iron ions (Fe) depletion. Promotes disease resistance toward B.cinerea, H.arabidopsidis and P.syringae pv. tomato DC3000. Required during rhizobacteria-mediated (e.g. P.fluorescens WCS417r) broad-spectrum induced systemic resistance (ISR) against several pathogens. The chain is Beta-glucosidase 42 from Arabidopsis thaliana (Mouse-ear cress).